The chain runs to 688 residues: NADH-ubiquinone oxidoreductase 75 kDa subunit (688 aa).

One can recognise a 2Fe-2S ferredoxin-type domain in the interval 1–85 (MLIRFKINEI…DESIETEIDE (85 aa)). Cys-38, Cys-49, Cys-52, and Cys-66 together coordinate [2Fe-2S] cluster. A 4Fe-4S His(Cys)3-ligated-type domain is found at 85–124 (EILKAREGVMEFLLINHPLDCPICDQGGECDLQEQTIAYG). Residues His-101, Cys-105, Cys-108, Cys-114, Cys-153, Cys-156, Cys-159, and Cys-204 each contribute to the [4Fe-4S] cluster site. The region spanning 223 to 279 (LKNIKGIDIFDTVLTPINYQVKGGEIFRILPRINDRLNEEWITDKVRFHYESYKIIE) is the 4Fe-4S Mo/W bis-MGD-type domain.

This sequence belongs to the complex I 75 kDa subunit family. Complex I is composed of about 45 different subunits. It depends on [2Fe-2S] cluster as a cofactor. [4Fe-4S] cluster is required as a cofactor.

It localises to the mitochondrion inner membrane. It catalyses the reaction a ubiquinone + NADH + 5 H(+)(in) = a ubiquinol + NAD(+) + 4 H(+)(out). In terms of biological role, core subunit of the mitochondrial membrane respiratory chain NADH dehydrogenase (Complex I) that is believed to belong to the minimal assembly required for catalysis. Complex I functions in the transfer of electrons from NADH to the respiratory chain. The immediate electron acceptor for the enzyme is believed to be ubiquinone. This is the largest subunit of complex I and it is a component of the iron-sulfur (IP) fragment of the enzyme. It may form part of the active site crevice where NADH is oxidized. In Dictyostelium citrinum (Slime mold), this protein is NADH-ubiquinone oxidoreductase 75 kDa subunit (nad11).